The chain runs to 486 residues: MVENQRAMPQPEMRRIRRIHFVGIGGVGMCGIAEVLLNLGYEVSGSDLKGSAVTERLESFGAQIFVGHRAENTVGADVLVVSSAVNTSNPEVATALERRIPVVPRAEMLAELMRYRHGIAVAGTHGKTTTTSLIASVFAAGGLDPTFVIGGRLNAAGTNAQLGTSRYLIAEADESDASFLHLQPLVAVVTNIDADHMATYEGDFNKLKKTFVEFLHNLPFYGLAVMCIDDPVVREILPLVKRPTLTYGFSESADIRAINVRQDGMLTFFTVLRRDREPLDVSVNMPGNHNVLNSLATIAIATDEGVSDEAIVQGLSGFQGVGRRFQVYGELPVEGGNVMLVDDYGHHPREVSAVISAVRGGWPDRRLVMVYQPHRFSRTRDLYDDFVQVLADANVLLLMEVYPAGEEPIPGADSRNLCHSIRQRGQLDPIYIERGVELAPLVKPLLRAGDILLCQGAGDIGGLAPQLLKSPLFAGAKAAPTEGKLK.

123–129 (GTHGKTT) contacts ATP.

The protein belongs to the MurCDEF family.

It localises to the cytoplasm. It catalyses the reaction UDP-N-acetyl-alpha-D-muramate + L-alanine + ATP = UDP-N-acetyl-alpha-D-muramoyl-L-alanine + ADP + phosphate + H(+). It functions in the pathway cell wall biogenesis; peptidoglycan biosynthesis. Its function is as follows. Cell wall formation. The chain is UDP-N-acetylmuramate--L-alanine ligase from Pseudomonas savastanoi pv. phaseolicola (strain 1448A / Race 6) (Pseudomonas syringae pv. phaseolicola (strain 1448A / Race 6)).